Consider the following 512-residue polypeptide: ETS translocation variant 3 (512 aa).

A DNA-binding region (ETS) is located at residues 35 to 116 (IQLWHFILEL…KGKRFTYKFN (82 aa)). The tract at residues 136-222 (VPQSAPPVPT…NAIGGGGIGH (87 aa)) is disordered. Phosphoserine occurs at positions 139, 159, and 315. Residues 158-184 (HSPTNDVQPGRFSASSLTASGQESSNG) show a composition bias toward polar residues. The segment at 336-512 (PEESTQFSIK…QGLATAAADA (177 aa)) is disordered. Residues 380-406 (IKVEPASEKDPESLRQSAREKEEHTQE) show a composition bias toward basic and acidic residues. Residue K381 forms a Glycyl lysine isopeptide (Lys-Gly) (interchain with G-Cter in SUMO2) linkage. K388 bears the N6-acetyllysine; alternate mark. Residue K388 forms a Glycyl lysine isopeptide (Lys-Gly) (interchain with G-Cter in SUMO2); alternate linkage. Over residues 443–452 (EPLEVTEDIE) the composition is skewed to acidic residues. Composition is skewed to basic and acidic residues over residues 453-468 (DRPGKEPSAPEKKEDA) and 479-491 (RWNDDPEARELSK).

This sequence belongs to the ETS family.

The protein localises to the nucleus. Transcriptional repressor that contribute to growth arrest during terminal macrophage differentiation by repressing target genes involved in Ras-dependent proliferation. Represses MMP1 promoter activity. This chain is ETS translocation variant 3 (ETV3), found in Pan troglodytes (Chimpanzee).